The chain runs to 531 residues: MSQEILDQVRRRRTFAIISHPDAGKTTLTEKLLLFSGAIQSAGTVKGKKTGKFATSDWMEIEKQRGISVASSVMQFDYKDHTVNLLDTPGHQDFSEDTYRVLTAVDSALMVIDAAKGVEAQTIKLLNVCRLRDTPIVTFMNKYDREVRDSLELLDEVENILKIRCAPVTWPIGMGKNFKGVYHILNDEIYLFEAGGERLPHEFDIIKGIDNPELEQRFPLEIQQLRDEIELVQAASNEFNLDEFLAGELTPVFFGSAINNFGIQEILNSLIDWAPAPKPRDATVRMVEPDEPKFSGFIFKIQANMDPKHRDRIAFLRVCSGKFERGMKMKHLRINREIAASSVVTFMSHDRELVEEAYAGDIIGIPNHGNIQIGDSFSEGEQLAFTGIPFFAPELFRSVRIKNPLKIKQLQKGLQQLGEEGAVQVFKPMSGADLILGAVGVLQFEVVTSRLANEYGVEAVFDSASIWSARWVSCDDKKKLAEFEKANAGNLAIDAGGNLAYLAPNRVNLGLTQERWPDIVFHETREHSVKL.

The tr-type G domain maps to 10 to 278 (RRRRTFAIIS…SLIDWAPAPK (269 aa)). GTP contacts are provided by residues 19 to 26 (SHPDAGKT), 87 to 91 (DTPGH), and 141 to 144 (NKYD).

The protein belongs to the TRAFAC class translation factor GTPase superfamily. Classic translation factor GTPase family. PrfC subfamily.

The protein localises to the cytoplasm. Increases the formation of ribosomal termination complexes and stimulates activities of RF-1 and RF-2. It binds guanine nucleotides and has strong preference for UGA stop codons. It may interact directly with the ribosome. The stimulation of RF-1 and RF-2 is significantly reduced by GTP and GDP, but not by GMP. This is Peptide chain release factor 3 from Neisseria meningitidis serogroup B (strain ATCC BAA-335 / MC58).